We begin with the raw amino-acid sequence, 310 residues long: Very-long-chain enoyl-CoA reductase (310 aa).

At 1–85 the chain is on the cytoplasmic side; it reads MPITIKSRSK…KDLGPQISWR (85 aa). A helical membrane pass occupies residues 86–106; that stretch reads LVFFCEYLGPVLVHSLFYYLS. Over 107–141 the chain is Lumenal; it reads TIPTVVDRWHSASSDYNPFLNRVAYFLILGHYGKR. The chain crosses the membrane as a helical span at residues 142–162; sequence LFETLFVHQFSLATMPIFNLF. Residues 163–165 lie on the Cytoplasmic side of the membrane; that stretch reads KNC. Residues 166-186 form a helical membrane-spanning segment; sequence FHYWVLSGLISFGYFGYGFPF. Over 187–201 the chain is Lumenal; that stretch reads GNAKLFKYYSYLKLD. A helical membrane pass occupies residues 202–222; sequence DLSTLIGLFVLSELWNFYCHI. Topologically, residues 223 to 242 are cytoplasmic; it reads KLRLWGDYQKKHGNAKIRVP. The helical transmembrane segment at 243–265 threads the bilayer; that stretch reads LNQGIFNLFVAPNYTFEVWSWIW. The Lumenal segment spans residues 266-268; sequence FTF. The chain crosses the membrane as a helical span at residues 269 to 291; that stretch reads VFKFNLFAVLFLTVSTAQMYAWA. Over 292-310 the chain is Cytoplasmic; the sequence is QKKNKKYHTRRAFLIPFVF.

This sequence belongs to the steroid 5-alpha reductase family. In terms of assembly, interacts with the fatty acid elongation system components ELO2 and ELO3. Interacts with NVJ1.

It is found in the endoplasmic reticulum membrane. It catalyses the reaction a very-long-chain 2,3-saturated fatty acyl-CoA + NADP(+) = a very-long-chain (2E)-enoyl-CoA + NADPH + H(+). The catalysed reaction is octadecanoyl-CoA + NADP(+) = (2E)-octadecenoyl-CoA + NADPH + H(+). It carries out the reaction (2E)-eicosenoyl-CoA + NADPH + H(+) = eicosanoyl-CoA + NADP(+). The enzyme catalyses (2E)-docosenoyl-CoA + NADPH + H(+) = docosanoyl-CoA + NADP(+). It catalyses the reaction (2E)-tetracosenoyl-CoA + NADPH + H(+) = tetracosanoyl-CoA + NADP(+). The catalysed reaction is (2E)-hexacosenoyl-CoA + NADPH + H(+) = hexacosanoyl-CoA + NADP(+). It participates in lipid metabolism; fatty acid biosynthesis. Functionally, catalyzes the last of the four reactions of the long-chain fatty acids elongation cycle. This endoplasmic reticulum-bound enzymatic process, allows the addition of 2 carbons to the chain of long- and very long-chain fatty acids/VLCFAs per cycle. This enzyme reduces the trans-2,3-enoyl-CoA fatty acid intermediate to an acyl-CoA that can be further elongated by entering a new cycle of elongation. Thereby, it participates in the production of VLCFAs of different chain lengths that are involved in multiple biological processes as precursors of membrane lipids and lipid mediators. VLCFAs serve for instance as precursors for ceramide and sphingolipids. Required for normal biogenesis of piecemeal microautophagy of the nucleus (PMN) bleps and vesicles during nutrient stress. The polypeptide is Very-long-chain enoyl-CoA reductase (TSC13) (Saccharomyces cerevisiae (strain ATCC 204508 / S288c) (Baker's yeast)).